Consider the following 276-residue polypeptide: Large ribosomal subunit protein uL2 (276 aa).

Disordered regions lie at residues 37–59 and 224–276; these read QFQK…GGHK and VAMN…RHKR. The segment covering 50 to 59 has biased composition (basic residues); that stretch reads TTRHKGGGHK.

The protein belongs to the universal ribosomal protein uL2 family. Part of the 50S ribosomal subunit. Forms a bridge to the 30S subunit in the 70S ribosome.

In terms of biological role, one of the primary rRNA binding proteins. Required for association of the 30S and 50S subunits to form the 70S ribosome, for tRNA binding and peptide bond formation. It has been suggested to have peptidyltransferase activity; this is somewhat controversial. Makes several contacts with the 16S rRNA in the 70S ribosome. In Ralstonia nicotianae (strain ATCC BAA-1114 / GMI1000) (Ralstonia solanacearum), this protein is Large ribosomal subunit protein uL2.